The primary structure comprises 167 residues: MADDATRKAVSDIPLLKTNSGPRDKELWVQRLREEYLALIKYVENNKVADNDWFRLESNKEGTRWFGKCWYIHDLMKYEFDVEFDIPVTYPTTAPEVAIPELDGKTAKMYRGGKICLTDHFKPLWARNVPKFGLAHLMALGLGPWLAVEIPDLISKGIVVHKEQQNN.

The Glycyl thioester intermediate role is filled by cysteine 116.

This sequence belongs to the ubiquitin-conjugating enzyme family. UFC1 subfamily. In terms of assembly, interacts with UBA5 (via C-terminus). Interacts with UFL1. Interacts with UFM1.

E2-like enzyme which specifically catalyzes the second step in ufmylation. Accepts the ubiquitin-like modifier UFM1 from the E1 enzyme UBA5 and forms an intermediate with UFM1 via a thioester linkage. Ufmylation is involved in various processes, such as ribosome recycling, response to DNA damage, interferon response or reticulophagy (also called ER-phagy). This is Ubiquitin-fold modifier-conjugating enzyme 1 from Osmerus mordax (Rainbow smelt).